A 76-amino-acid chain; its full sequence is Acyl carrier protein (76 aa).

Residues 1-76 (MATFDDVKDV…AAVDYIDNNQ (76 aa)) form the Carrier domain. Residue Ser36 is modified to O-(pantetheine 4'-phosphoryl)serine.

Belongs to the acyl carrier protein (ACP) family. 4'-phosphopantetheine is transferred from CoA to a specific serine of apo-ACP by AcpS. This modification is essential for activity because fatty acids are bound in thioester linkage to the sulfhydryl of the prosthetic group.

Its subcellular location is the cytoplasm. It functions in the pathway lipid metabolism; fatty acid biosynthesis. Carrier of the growing fatty acid chain in fatty acid biosynthesis. This is Acyl carrier protein from Deinococcus radiodurans (strain ATCC 13939 / DSM 20539 / JCM 16871 / CCUG 27074 / LMG 4051 / NBRC 15346 / NCIMB 9279 / VKM B-1422 / R1).